The chain runs to 524 residues: Nucleobase-ascorbate transporter 2 (524 aa).

Transmembrane regions (helical) follow at residues Tyr-41 to Gly-61, Val-69 to Thr-89, Leu-91 to Asp-111, Gly-133 to Ile-153, Ser-155 to Phe-175, Phe-179 to Phe-199, Phe-217 to Gly-237, Ala-282 to Ala-302, Arg-359 to Ala-379, Leu-380 to Val-400, Leu-419 to Phe-439, and Asp-457 to Leu-477.

This sequence belongs to the nucleobase:cation symporter-2 (NCS2) (TC 2.A.40) family. In terms of tissue distribution, expressed in cotyledons 10 days after imbibition (DAI). Expressed in the minor and major veins of cotyledons and leaves, in the shoot apex and pedicels. Expressed in the root meristems, root tips and lateral root primordia.

It localises to the membrane. This is Nucleobase-ascorbate transporter 2 (NAT2) from Arabidopsis thaliana (Mouse-ear cress).